We begin with the raw amino-acid sequence, 430 residues long: Replication factor C large subunit (430 aa).

75 to 82 (GPPGTGKT) is an ATP binding site.

It belongs to the activator 1 small subunits family. RfcL subfamily. In terms of assembly, heteromultimer composed of small subunits (RfcS) and large subunits (RfcL).

In terms of biological role, part of the RFC clamp loader complex which loads the PCNA sliding clamp onto DNA. This Nanoarchaeum equitans (strain Kin4-M) protein is Replication factor C large subunit.